A 410-amino-acid polypeptide reads, in one-letter code: Phosphoglycerate kinase (410 aa).

Residues 19–21 (DLN), R34, 57–60 (HQGK), R114, and R154 each bind substrate. ATP-binding positions include E332 and 358 to 361 (GGHS).

The protein belongs to the phosphoglycerate kinase family. Homodimer.

The protein localises to the cytoplasm. The enzyme catalyses (2R)-3-phosphoglycerate + ATP = (2R)-3-phospho-glyceroyl phosphate + ADP. It functions in the pathway carbohydrate degradation; glycolysis; pyruvate from D-glyceraldehyde 3-phosphate: step 2/5. In Pyrococcus furiosus (strain ATCC 43587 / DSM 3638 / JCM 8422 / Vc1), this protein is Phosphoglycerate kinase (pgk).